The chain runs to 298 residues: Acetylglutamate kinase (298 aa).

Substrate contacts are provided by residues 69–70, R91, and N191; that span reads GG.

It belongs to the acetylglutamate kinase family. ArgB subfamily.

It localises to the cytoplasm. It carries out the reaction N-acetyl-L-glutamate + ATP = N-acetyl-L-glutamyl 5-phosphate + ADP. It participates in amino-acid biosynthesis; L-arginine biosynthesis; N(2)-acetyl-L-ornithine from L-glutamate: step 2/4. Functionally, catalyzes the ATP-dependent phosphorylation of N-acetyl-L-glutamate. This Neisseria meningitidis serogroup C (strain 053442) protein is Acetylglutamate kinase.